The following is a 121-amino-acid chain: Ribosome-binding factor A (121 aa).

This sequence belongs to the RbfA family. Monomer. Binds 30S ribosomal subunits, but not 50S ribosomal subunits or 70S ribosomes.

It localises to the cytoplasm. One of several proteins that assist in the late maturation steps of the functional core of the 30S ribosomal subunit. Associates with free 30S ribosomal subunits (but not with 30S subunits that are part of 70S ribosomes or polysomes). Required for efficient processing of 16S rRNA. May interact with the 5'-terminal helix region of 16S rRNA. This Agathobacter rectalis (strain ATCC 33656 / DSM 3377 / JCM 17463 / KCTC 5835 / VPI 0990) (Eubacterium rectale) protein is Ribosome-binding factor A.